The sequence spans 238 residues: 1-(5-phosphoribosyl)-5-[(5-phosphoribosylamino)methylideneamino] imidazole-4-carboxamide isomerase (238 aa).

The active-site Proton acceptor is the Asp-8. Asp-130 serves as the catalytic Proton donor.

Belongs to the HisA/HisF family.

The protein resides in the cytoplasm. It carries out the reaction 1-(5-phospho-beta-D-ribosyl)-5-[(5-phospho-beta-D-ribosylamino)methylideneamino]imidazole-4-carboxamide = 5-[(5-phospho-1-deoxy-D-ribulos-1-ylimino)methylamino]-1-(5-phospho-beta-D-ribosyl)imidazole-4-carboxamide. The protein operates within amino-acid biosynthesis; L-histidine biosynthesis; L-histidine from 5-phospho-alpha-D-ribose 1-diphosphate: step 4/9. In Methanococcus maripaludis (strain C7 / ATCC BAA-1331), this protein is 1-(5-phosphoribosyl)-5-[(5-phosphoribosylamino)methylideneamino] imidazole-4-carboxamide isomerase.